The following is a 203-amino-acid chain: Lipoprotein MlpJ (203 aa).

The N-terminal stretch at 1-17 (MKIINILFCISLLLLNS) is a signal peptide. The N-palmitoyl cysteine moiety is linked to residue cysteine 18. A lipid anchor (S-diacylglycerol cysteine) is attached at cysteine 18. Residues 26-47 (LKNNAQQTKSRKKRDLSQEELP) are disordered.

Belongs to the Multicopy lipoprotein (Mlp) family.

The protein resides in the cell outer membrane. In terms of biological role, an outer membrane protein that may participate in pathogenesis. Some human Lyme disease patients have antibodies against this protein. The Mlp proteins probably undergo intragenic recombination, generating new alleles. The sequence is that of Lipoprotein MlpJ from Borreliella burgdorferi (strain ATCC 35210 / DSM 4680 / CIP 102532 / B31) (Borrelia burgdorferi).